The sequence spans 249 residues: 1-(5-phosphoribosyl)-5-[(5-phosphoribosylamino)methylideneamino] imidazole-4-carboxamide isomerase (249 aa).

Asp-8 acts as the Proton acceptor in catalysis. Catalysis depends on Asp-129, which acts as the Proton donor.

This sequence belongs to the HisA/HisF family.

It is found in the cytoplasm. The catalysed reaction is 1-(5-phospho-beta-D-ribosyl)-5-[(5-phospho-beta-D-ribosylamino)methylideneamino]imidazole-4-carboxamide = 5-[(5-phospho-1-deoxy-D-ribulos-1-ylimino)methylamino]-1-(5-phospho-beta-D-ribosyl)imidazole-4-carboxamide. The protein operates within amino-acid biosynthesis; L-histidine biosynthesis; L-histidine from 5-phospho-alpha-D-ribose 1-diphosphate: step 4/9. The sequence is that of 1-(5-phosphoribosyl)-5-[(5-phosphoribosylamino)methylideneamino] imidazole-4-carboxamide isomerase from Nitratidesulfovibrio vulgaris (strain ATCC 29579 / DSM 644 / CCUG 34227 / NCIMB 8303 / VKM B-1760 / Hildenborough) (Desulfovibrio vulgaris).